The following is a 177-amino-acid chain: Ubiquinol-cytochrome c reductase iron-sulfur subunit (177 aa).

Residues 18 to 38 (MVLTASSVAAVGAVCTLWPLV) form a helical membrane-spanning segment. One can recognise a Rieske domain in the interval 88 to 175 (ARAVKMSELI…YTFISDKKIR (88 aa)). [2Fe-2S] cluster-binding residues include cysteine 120, histidine 122, cysteine 139, and histidine 142. An intrachain disulfide couples cysteine 125 to cysteine 141.

The protein belongs to the Rieske iron-sulfur protein family. The main subunits of complex b-c1 are: cytochrome b, cytochrome c1 and the Rieske protein. [2Fe-2S] cluster serves as cofactor.

It is found in the cell membrane. It carries out the reaction a quinol + 2 Fe(III)-[cytochrome c](out) = a quinone + 2 Fe(II)-[cytochrome c](out) + 2 H(+)(out). Its function is as follows. Component of the ubiquinol-cytochrome c reductase complex (complex III or cytochrome b-c1 complex), which is a respiratory chain that generates an electrochemical potential coupled to ATP synthesis. The polypeptide is Ubiquinol-cytochrome c reductase iron-sulfur subunit (petA) (Rickettsia felis (strain ATCC VR-1525 / URRWXCal2) (Rickettsia azadi)).